Consider the following 125-residue polypeptide: Large ribosomal subunit protein bL20 (125 aa).

Belongs to the bacterial ribosomal protein bL20 family.

Its function is as follows. Binds directly to 23S ribosomal RNA and is necessary for the in vitro assembly process of the 50S ribosomal subunit. It is not involved in the protein synthesizing functions of that subunit. The protein is Large ribosomal subunit protein bL20 of Methylobacterium radiotolerans (strain ATCC 27329 / DSM 1819 / JCM 2831 / NBRC 15690 / NCIMB 10815 / 0-1).